Consider the following 643-residue polypeptide: UPF0313 protein CLD_0573 (643 aa).

In terms of domain architecture, Radical SAM core spans 295-566 (AIKEVKFSIT…RMQRALLQFS (272 aa)). Positions 309, 313, and 316 each coordinate [4Fe-4S] cluster. The interval 598–643 (NKPYKKSHKKNNAKNNNNHYNKNNNKNKDISKKNKKNSLSKHKKRK) is disordered. A compositionally biased stretch (basic residues) spans 600-609 (PYKKSHKKNN). Over residues 610 to 621 (AKNNNNHYNKNN) the composition is skewed to low complexity. Residues 630-643 (KNKKNSLSKHKKRK) are compositionally biased toward basic residues.

This sequence belongs to the UPF0313 family. [4Fe-4S] cluster serves as cofactor.

This is UPF0313 protein CLD_0573 from Clostridium botulinum (strain Okra / Type B1).